The chain runs to 185 residues: Probable prefoldin subunit 3 (185 aa).

It belongs to the prefoldin subunit alpha family. Heterohexamer of two PFD-alpha type and four PFD-beta type subunits.

In terms of biological role, binds specifically to cytosolic chaperonin (c-CPN) and transfers target proteins to it. Binds to nascent polypeptide chain and promotes folding in an environment in which there are many competing pathways for nonnative proteins. This is Probable prefoldin subunit 3 (pfd-3) from Caenorhabditis elegans.